We begin with the raw amino-acid sequence, 289 residues long: DDRGK domain-containing protein 1 (289 aa).

At 1–2 the chain is on the lumenal side; it reads MD. Residues 3-23 traverse the membrane as a helical segment; the sequence is PFILAAIISGIVIIILSIAFL. Residues 24–289 lie on the Cytoplasmic side of the membrane; it reads RVSQVKPQAA…LINLAPVTVP (266 aa). The interval 65-168 is disordered; it reads RHQAALEEEP…DERKKREQEE (104 aa). Positions 70-85 are enriched in acidic residues; it reads LEEEPEIQEEADEGAP. Residues 87–166 show a composition bias toward basic and acidic residues; the sequence is IDQKIDFDDK…AEDERKKREQ (80 aa).

It belongs to the DDRGK1 family. Interacts with Atg9; the interaction is transient.

It localises to the endoplasmic reticulum membrane. Functionally, substrate adapter for ufmylation, the covalent attachment of the ubiquitin-like modifier UFM1 to substrate proteins. Required for ufmylation of Atg9; protects the nervous system during aging, possibly by stabilizing Atg9 and supporting its function. The chain is DDRGK domain-containing protein 1 from Bombyx mori (Silk moth).